Reading from the N-terminus, the 134-residue chain is Small ribosomal subunit protein bS6 (134 aa).

The protein belongs to the bacterial ribosomal protein bS6 family.

Functionally, binds together with bS18 to 16S ribosomal RNA. This chain is Small ribosomal subunit protein bS6, found in Pelodictyon phaeoclathratiforme (strain DSM 5477 / BU-1).